Here is a 68-residue protein sequence, read N- to C-terminus: Large ribosomal subunit protein uL29 (68 aa).

Belongs to the universal ribosomal protein uL29 family.

In Maricaulis maris (strain MCS10) (Caulobacter maris), this protein is Large ribosomal subunit protein uL29.